Consider the following 357-residue polypeptide: ATP-dependent 6-phosphofructokinase 2 (357 aa).

ATP contacts are provided by residues Gly-12, 80 to 81 (KG), and 107 to 110 (GDGS). Residue Asp-108 coordinates Mg(2+). Substrate is bound by residues 131-133 (TID), Arg-168, 175-177 (MGR), Glu-229, Arg-272, and 278-281 (HIQR). Residue Asp-133 is the Proton acceptor of the active site.

Belongs to the phosphofructokinase type A (PFKA) family. Mixed-substrate PFK group III subfamily. In terms of assembly, homodimer or homotetramer. It depends on Mg(2+) as a cofactor.

The protein localises to the cytoplasm. The catalysed reaction is beta-D-fructose 6-phosphate + ATP = beta-D-fructose 1,6-bisphosphate + ADP + H(+). The protein operates within carbohydrate degradation; glycolysis; D-glyceraldehyde 3-phosphate and glycerone phosphate from D-glucose: step 3/4. Its activity is regulated as follows. Subject to allosteric activation by ADP and other diphosphonucleosides, and inhibition by phosphoenolpyruvate. Catalyzes the phosphorylation of D-fructose 6-phosphate to fructose 1,6-bisphosphate by ATP, the first committing step of glycolysis. The polypeptide is ATP-dependent 6-phosphofructokinase 2 (Nostoc sp. (strain PCC 7120 / SAG 25.82 / UTEX 2576)).